The following is a 126-amino-acid chain: uncharacterized protein (126 aa).

A run of 2 helical transmembrane segments spans residues 21–43 (LIVWNIFVNLRLGVFLLLVRIFS) and 48–70 (SVTFLGLFRTLLPVGRICFLLLL).

The protein resides in the membrane. This is an uncharacterized protein from Saccharomyces cerevisiae (strain ATCC 204508 / S288c) (Baker's yeast).